Consider the following 226-residue polypeptide: PKHD-type hydroxylase PFL_0865 (226 aa).

Residues K78–S178 enclose the Fe2OG dioxygenase domain. Positions 96, 98, and 159 each coordinate Fe cation. R169 is a 2-oxoglutarate binding site.

Fe(2+) serves as cofactor. L-ascorbate is required as a cofactor.

The protein is PKHD-type hydroxylase PFL_0865 of Pseudomonas fluorescens (strain ATCC BAA-477 / NRRL B-23932 / Pf-5).